Reading from the N-terminus, the 346-residue chain is Phosphoribosylformylglycinamidine cyclo-ligase (346 aa).

Belongs to the AIR synthase family.

Its subcellular location is the cytoplasm. It catalyses the reaction 2-formamido-N(1)-(5-O-phospho-beta-D-ribosyl)acetamidine + ATP = 5-amino-1-(5-phospho-beta-D-ribosyl)imidazole + ADP + phosphate + H(+). It participates in purine metabolism; IMP biosynthesis via de novo pathway; 5-amino-1-(5-phospho-D-ribosyl)imidazole from N(2)-formyl-N(1)-(5-phospho-D-ribosyl)glycinamide: step 2/2. This Bacillus cereus (strain AH187) protein is Phosphoribosylformylglycinamidine cyclo-ligase.